We begin with the raw amino-acid sequence, 664 residues long: Bifunctional polymyxin resistance protein ArnA (664 aa).

The formyltransferase ArnAFT stretch occupies residues 1-308 (MSTKAVVFAY…EFGLVAGSQM (308 aa)). The Proton donor; for formyltransferase activity role is filled by histidine 106. (6R)-10-formyltetrahydrofolate is bound by residues arginine 116 and 138–142 (VKRAD). The tract at residues 318 to 664 (RRTRVLILGV…EAMAEKADQC (347 aa)) is dehydrogenase ArnADH. Residues aspartate 351 and 372-373 (DI) each bind NAD(+). Residues alanine 397, tyrosine 402, and 436–437 (TS) contribute to the UDP-alpha-D-glucuronate site. Glutamate 438 functions as the Proton acceptor; for decarboxylase activity in the catalytic mechanism. UDP-alpha-D-glucuronate-binding positions include arginine 464, asparagine 495, 529 to 538 (RLVDGGAQKR), and tyrosine 616. The active-site Proton donor; for decarboxylase activity is arginine 622.

This sequence in the N-terminal section; belongs to the Fmt family. UDP-L-Ara4N formyltransferase subfamily. The protein in the C-terminal section; belongs to the NAD(P)-dependent epimerase/dehydratase family. UDP-glucuronic acid decarboxylase subfamily. Homohexamer, formed by a dimer of trimers.

The enzyme catalyses UDP-alpha-D-glucuronate + NAD(+) = UDP-beta-L-threo-pentopyranos-4-ulose + CO2 + NADH. It catalyses the reaction UDP-4-amino-4-deoxy-beta-L-arabinose + (6R)-10-formyltetrahydrofolate = UDP-4-deoxy-4-formamido-beta-L-arabinose + (6S)-5,6,7,8-tetrahydrofolate + H(+). The protein operates within nucleotide-sugar biosynthesis; UDP-4-deoxy-4-formamido-beta-L-arabinose biosynthesis; UDP-4-deoxy-4-formamido-beta-L-arabinose from UDP-alpha-D-glucuronate: step 1/3. It participates in nucleotide-sugar biosynthesis; UDP-4-deoxy-4-formamido-beta-L-arabinose biosynthesis; UDP-4-deoxy-4-formamido-beta-L-arabinose from UDP-alpha-D-glucuronate: step 3/3. Its pathway is bacterial outer membrane biogenesis; lipopolysaccharide biosynthesis. In terms of biological role, bifunctional enzyme that catalyzes the oxidative decarboxylation of UDP-glucuronic acid (UDP-GlcUA) to UDP-4-keto-arabinose (UDP-Ara4O) and the addition of a formyl group to UDP-4-amino-4-deoxy-L-arabinose (UDP-L-Ara4N) to form UDP-L-4-formamido-arabinose (UDP-L-Ara4FN). The modified arabinose is attached to lipid A and is required for resistance to polymyxin and cationic antimicrobial peptides. This is Bifunctional polymyxin resistance protein ArnA from Pseudomonas syringae pv. syringae (strain B728a).